Reading from the N-terminus, the 325-residue chain is Beta-ketoacyl-[acyl-carrier-protein] synthase III (325 aa).

Catalysis depends on residues cysteine 116 and histidine 252. The interval 253 to 257 (QANLR) is ACP-binding. Asparagine 282 is an active-site residue.

This sequence belongs to the thiolase-like superfamily. FabH family. In terms of assembly, homodimer.

The protein resides in the cytoplasm. The enzyme catalyses malonyl-[ACP] + acetyl-CoA + H(+) = 3-oxobutanoyl-[ACP] + CO2 + CoA. Its pathway is lipid metabolism; fatty acid biosynthesis. In terms of biological role, catalyzes the condensation reaction of fatty acid synthesis by the addition to an acyl acceptor of two carbons from malonyl-ACP. Catalyzes the first condensation reaction which initiates fatty acid synthesis and may therefore play a role in governing the total rate of fatty acid production. Possesses both acetoacetyl-ACP synthase and acetyl transacylase activities. Its substrate specificity determines the biosynthesis of branched-chain and/or straight-chain of fatty acids. This is Beta-ketoacyl-[acyl-carrier-protein] synthase III from Xanthomonas axonopodis pv. citri (strain 306).